The following is a 291-amino-acid chain: Pantothenate synthetase 1 (291 aa).

His-37 (proton donor) is an active-site residue. 147–150 contributes to the ATP binding site; the sequence is GEKD. Gln-153 contributes to the (R)-pantoate binding site. 184–187 serves as a coordination point for ATP; it reads ISSR.

It belongs to the pantothenate synthetase family. Homodimer.

Its subcellular location is the cytoplasm. It carries out the reaction (R)-pantoate + beta-alanine + ATP = (R)-pantothenate + AMP + diphosphate + H(+). It participates in cofactor biosynthesis; (R)-pantothenate biosynthesis; (R)-pantothenate from (R)-pantoate and beta-alanine: step 1/1. Functionally, catalyzes the condensation of pantoate with beta-alanine in an ATP-dependent reaction via a pantoyl-adenylate intermediate. This is Pantothenate synthetase 1 from Frankia alni (strain DSM 45986 / CECT 9034 / ACN14a).